Reading from the N-terminus, the 125-residue chain is 13 kDa ribonucleoprotein-associated protein (125 aa).

This sequence belongs to the eukaryotic ribosomal protein eL8 family. As to quaternary structure, component of the U3 snoRNP particle. Binds to the C'/D and B/C motifs in U3 snoRNA. Component of the 25S U4/U6.U5 tri-snRNP particle, a subcomplex of the spliceosome. Binds to the 5' stem-loop of U4 snRNA.

The protein localises to the nucleus. The protein resides in the nucleolus. Common component of the spliceosome and rRNA processing machinery. In association with the spliceosomal U4/U6.U5 tri-snRNP particle, required for splicing of pre-mRNA. In association with box C/D snoRNPs, required for processing of pre-ribosomal RNA (rRNA) and site-specific 2'-O-methylation of substrate RNAs. Essential for the accumulation and stability of U4 snRNA, U6 snRNA, and box C/D snoRNAs. This chain is 13 kDa ribonucleoprotein-associated protein (snu13), found in Schizosaccharomyces pombe (strain 972 / ATCC 24843) (Fission yeast).